A 192-amino-acid chain; its full sequence is Ribosomal RNA large subunit methyltransferase E (192 aa).

The S-adenosyl-L-methionine site is built by glycine 48, phenylalanine 50, aspartate 67, aspartate 85, and aspartate 107. Lysine 147 (proton acceptor) is an active-site residue.

The protein belongs to the class I-like SAM-binding methyltransferase superfamily. RNA methyltransferase RlmE family.

The protein localises to the cytoplasm. The enzyme catalyses uridine(2552) in 23S rRNA + S-adenosyl-L-methionine = 2'-O-methyluridine(2552) in 23S rRNA + S-adenosyl-L-homocysteine + H(+). Functionally, specifically methylates the uridine in position 2552 of 23S rRNA at the 2'-O position of the ribose in the fully assembled 50S ribosomal subunit. The polypeptide is Ribosomal RNA large subunit methyltransferase E (Borrelia garinii subsp. bavariensis (strain ATCC BAA-2496 / DSM 23469 / PBi) (Borreliella bavariensis)).